Here is a 401-residue protein sequence, read N- to C-terminus: UPF0242 protein CCA_01002 (401 aa).

Belongs to the UPF0242 family.

The polypeptide is UPF0242 protein CCA_01002 (Chlamydia caviae (strain ATCC VR-813 / DSM 19441 / 03DC25 / GPIC) (Chlamydophila caviae)).